The sequence spans 497 residues: Glutathione hydrolase 6 (497 aa).

The disordered stretch occupies residues M1–A34. At M1–E51 the chain is on the cytoplasmic side. Residues V20–A34 show a composition bias toward acidic residues. Residues V52–S72 traverse the membrane as a helical; Signal-anchor for type II membrane protein segment. The Extracellular segment spans residues S73–Y497. N164, N169, N367, and N378 each carry an N-linked (GlcNAc...) asparagine glycan.

It belongs to the gamma-glutamyltransferase family. Heterodimer composed of the light and heavy chains. The active site is located in the light chain. Post-translationally, cleaved by autocatalysis into a large and a small subunit and the autocatalytic cleavage is essential to the functional activation of the enzyme.

The protein resides in the membrane. It carries out the reaction an N-terminal (5-L-glutamyl)-[peptide] + an alpha-amino acid = 5-L-glutamyl amino acid + an N-terminal L-alpha-aminoacyl-[peptide]. The catalysed reaction is glutathione + H2O = L-cysteinylglycine + L-glutamate. The enzyme catalyses an S-substituted glutathione + H2O = an S-substituted L-cysteinylglycine + L-glutamate. The protein operates within sulfur metabolism; glutathione metabolism. In terms of biological role, hydrolyzes and transfers gamma-glutamyl moieties from glutathione and other gamma-glutamyl compounds to acceptors. This chain is Glutathione hydrolase 6, found in Mus musculus (Mouse).